Here is a 665-residue protein sequence, read N- to C-terminus: Pentatricopeptide repeat-containing protein At1g04840 (665 aa).

11 PPR repeats span residues 90-124 (NPFV…GVKP), 125-155 (DRLT…TLKN), 160-190 (DSFV…SPDR), 195-229 (SILI…NSGS), 230-256 (WSTL…MPEK), 257-291 (NVVS…GLKP), 292-326 (NEYT…GIKL), 327-357 (DRAI…MNHK), 358-392 (DILS…GEKP), 393-423 (DEVV…MRLD), and 429-459 (TLKH…MPIN). The segment at 464 to 539 (TWAALYRACK…SLGWSYIELD (76 aa)) is type E motif. The type E(+) motif stretch occupies residues 540–570 (GQLNKFSAGDYSHKLTQEIGLKLDEIISLAI). A type DYW motif region spans residues 571-665 (QKGYNPGADW…DGRCSCGDYW (95 aa)).

It belongs to the PPR family. PCMP-H subfamily.

This Arabidopsis thaliana (Mouse-ear cress) protein is Pentatricopeptide repeat-containing protein At1g04840 (PCMP-H64).